We begin with the raw amino-acid sequence, 473 residues long: Photosystem II CP43 reaction center protein (473 aa).

A propeptide spanning residues 1 to 14 (MKTLYSLRRFYPVE) is cleaved from the precursor. At Thr-15 the chain carries N-acetylthreonine. At Thr-15 the chain carries Phosphothreonine. 5 helical membrane-spanning segments follow: residues 69–93 (LFEV…PHLA), 134–155 (LLGP…KDRN), 178–200 (KALY…RKIT), 255–275 (KPFA…LSYS), and 291–312 (WFNN…ASQA). [CaMn4O5] cluster is bound at residue Glu-367. Residues 447–471 (RARAAAAGFEKGIDRDFEPVLSMTP) form a helical membrane-spanning segment.

This sequence belongs to the PsbB/PsbC family. PsbC subfamily. As to quaternary structure, PSII is composed of 1 copy each of membrane proteins PsbA, PsbB, PsbC, PsbD, PsbE, PsbF, PsbH, PsbI, PsbJ, PsbK, PsbL, PsbM, PsbT, PsbX, PsbY, PsbZ, Psb30/Ycf12, at least 3 peripheral proteins of the oxygen-evolving complex and a large number of cofactors. It forms dimeric complexes. Requires Binds multiple chlorophylls and provides some of the ligands for the Ca-4Mn-5O cluster of the oxygen-evolving complex. It may also provide a ligand for a Cl- that is required for oxygen evolution. PSII binds additional chlorophylls, carotenoids and specific lipids. as cofactor.

It is found in the plastid. The protein resides in the chloroplast thylakoid membrane. One of the components of the core complex of photosystem II (PSII). It binds chlorophyll and helps catalyze the primary light-induced photochemical processes of PSII. PSII is a light-driven water:plastoquinone oxidoreductase, using light energy to abstract electrons from H(2)O, generating O(2) and a proton gradient subsequently used for ATP formation. The chain is Photosystem II CP43 reaction center protein from Daucus carota (Wild carrot).